The sequence spans 202 residues: Josephin-1 (202 aa).

A Phosphoserine modification is found at Ser15. Positions 23-202 (PPQIYHEKQR…EAHQSWRTDV (180 aa)) constitute a Josephin domain. Residue Cys36 is the Nucleophile of the active site. The Proton acceptor role is filled by His139.

As to quaternary structure, interacts with beta-actin/ACTB. In terms of processing, monoubiquitinated. Ubiquitination activates deubiquitination activity in vitro.

Its subcellular location is the cell membrane. It is found in the cytoplasm. The enzyme catalyses Thiol-dependent hydrolysis of ester, thioester, amide, peptide and isopeptide bonds formed by the C-terminal Gly of ubiquitin (a 76-residue protein attached to proteins as an intracellular targeting signal).. In terms of biological role, deubiquitinates monoubiquitinated probes (in vitro). When ubiquitinated, cleaves 'Lys-63'-linked and 'Lys-48'-linked poly-ubiquitin chains (in vitro), hence may act as a deubiquitinating enzyme. May increase macropinocytosis and suppress clathrin- and caveolae-mediated endocytosis. May enhance membrane dynamics and cell motility independently of its catalytic activity. This Pongo abelii (Sumatran orangutan) protein is Josephin-1 (JOSD1).